We begin with the raw amino-acid sequence, 115 residues long: Large ribosomal subunit protein bL19 (115 aa).

It belongs to the bacterial ribosomal protein bL19 family.

This protein is located at the 30S-50S ribosomal subunit interface and may play a role in the structure and function of the aminoacyl-tRNA binding site. This Lacticaseibacillus casei (strain BL23) (Lactobacillus casei) protein is Large ribosomal subunit protein bL19.